A 124-amino-acid chain; its full sequence is Small ribosomal subunit protein uS12 (124 aa).

The residue at position 89 (aspartate 89) is a 3-methylthioaspartic acid.

It belongs to the universal ribosomal protein uS12 family. In terms of assembly, part of the 30S ribosomal subunit. Contacts proteins S8 and S17. May interact with IF1 in the 30S initiation complex.

Functionally, with S4 and S5 plays an important role in translational accuracy. Its function is as follows. Interacts with and stabilizes bases of the 16S rRNA that are involved in tRNA selection in the A site and with the mRNA backbone. Located at the interface of the 30S and 50S subunits, it traverses the body of the 30S subunit contacting proteins on the other side and probably holding the rRNA structure together. The combined cluster of proteins S8, S12 and S17 appears to hold together the shoulder and platform of the 30S subunit. This is Small ribosomal subunit protein uS12 from Moorella thermoacetica (strain ATCC 39073 / JCM 9320).